Here is an 82-residue protein sequence, read N- to C-terminus: RNA-binding protein BH0128 (82 aa).

Belongs to the eukaryotic ribosomal protein eL8 family.

This chain is RNA-binding protein BH0128, found in Halalkalibacterium halodurans (strain ATCC BAA-125 / DSM 18197 / FERM 7344 / JCM 9153 / C-125) (Bacillus halodurans).